The chain runs to 1283 residues: uncharacterized protein (1283 aa).

One can recognise an LDL-receptor class A domain in the interval 10-46; sequence ACPPNTFTCADGSCIPSDWKGDGEKDCEDGSDEEAVT. Disulfide bonds link cysteine 11/cysteine 23 and cysteine 18/cysteine 36. Residues 27 to 47 are disordered; that stretch reads DWKGDGEKDCEDGSDEEAVTG. Over residues 34–45 the composition is skewed to acidic residues; that stretch reads KDCEDGSDEEAV. An N-linked (GlcNAc...) asparagine glycan is attached at asparagine 79. Positions 236 to 278 are disordered; that stretch reads STTLIVDETTESTSASAEDDDDDVLTTNTSEESTATTAHDEEV. The segment covering 261 to 272 has biased composition (low complexity); that stretch reads TTNTSEESTATT. Positions 332–389 form a coiled coil; it reads YQKTLEKEKCAIRNATSKCEALISYNNNLDCAIVTMNDECEVDAQNLVVELQEEVNDL. Disordered stretches follow at residues 621–651 and 1005–1046; these read ARPTPVTMPPRAPTAKPLPIPSAPTPPVASS and SSST…PTDG. Residues 626–647 are compositionally biased toward pro residues; sequence VTMPPRAPTAKPLPIPSAPTPP. A compositionally biased stretch (low complexity) spans 1005-1015; that stretch reads SSSTMVSTSSE. The span at 1016–1026 shows a compositional bias: acidic residues; the sequence is SDSESAPEQET. The segment covering 1027-1044 has biased composition (low complexity); that stretch reads EPTVPSTTETTESPSTPT. The helical transmembrane segment at 1263-1283 threads the bilayer; sequence VQSSVSFHIILAALIPFFALF.

The protein resides in the membrane. This is an uncharacterized protein from Caenorhabditis elegans.